The primary structure comprises 180 residues: Fanconi anemia core complex-associated protein 20 (180 aa).

Residues 1 to 17 (MEAARRPRLGLSRRRPR) are compositionally biased toward basic residues. 2 disordered regions span residues 1–28 (MEAA…GRPW) and 106–135 (GAGG…VEQQ). Residues serine 113 and serine 137 each carry the phosphoserine modification. Residues 144–180 (LRSCPMCQKEFAPRLTQLDVDSHLAQCLAESTEDVTW) form a UBZ2-type zinc finger. 4 residues coordinate Zn(2+): cysteine 147, cysteine 150, histidine 166, and cysteine 170.

As to quaternary structure, component of the Fanconi anemia (FA) complex. Interacts with FANCA; interaction is direct. Interacts with REV1. Reported to bind monoubiquitinated REV1; however it binds better to non-ubiquitinated REV1.

It is found in the nucleus. The protein resides in the chromosome. Its function is as follows. Component of the Fanconi anemia (FA) complex required to recruit the FA complex to DNA interstrand cross-links (ICLs) and promote ICLs repair. Following DNA damage recognizes and binds 'Lys-63'-linked ubiquitin generated by RNF8 at ICLs and recruits other components of the FA complex. Promotes translesion synthesis via interaction with REV1. This Homo sapiens (Human) protein is Fanconi anemia core complex-associated protein 20.